The following is a 221-amino-acid chain: Putative N-acetylmannosamine-6-phosphate 2-epimerase (221 aa).

This sequence belongs to the NanE family.

It catalyses the reaction an N-acyl-D-glucosamine 6-phosphate = an N-acyl-D-mannosamine 6-phosphate. The protein operates within amino-sugar metabolism; N-acetylneuraminate degradation; D-fructose 6-phosphate from N-acetylneuraminate: step 3/5. In terms of biological role, converts N-acetylmannosamine-6-phosphate (ManNAc-6-P) to N-acetylglucosamine-6-phosphate (GlcNAc-6-P). This chain is Putative N-acetylmannosamine-6-phosphate 2-epimerase, found in Clostridium perfringens (strain ATCC 13124 / DSM 756 / JCM 1290 / NCIMB 6125 / NCTC 8237 / Type A).